Consider the following 242-residue polypeptide: uncharacterized protein (242 aa).

It belongs to the MtxX family.

This is an uncharacterized protein from Methanothermobacter thermautotrophicus (strain ATCC 29096 / DSM 1053 / JCM 10044 / NBRC 100330 / Delta H) (Methanobacterium thermoautotrophicum).